We begin with the raw amino-acid sequence, 504 residues long: Transcriptional coactivator YAP1 (504 aa).

Composition is skewed to pro residues over residues 1-12 and 20-36; these read MDPGQQPPPQPA and PSQP…PGQP. The segment at 1 to 59 is disordered; sequence MDPGQQPPPQPAPQGQGQPPSQPPQGQGPPSGPGQPAPAATQAAPQAPPAGHQIVHVRG. The segment covering 37-51 has biased composition (low complexity); sequence APAATQAAPQAPPAG. Ser-61 carries the post-translational modification Phosphoserine; by LATS1 and LATS2. A Phosphothreonine modification is found at Thr-63. Residues 86 to 100 adopt a coiled-coil conformation; the sequence is MRLRKLPDSFFKPPE. Position 90 is an N6-lactoyllysine (Lys-90). The interval 91–114 is disordered; that stretch reads LPDSFFKPPEPKSHSRQASTDAGT. Residue Ser-105 is modified to Phosphoserine. Residue Ser-109 is modified to Phosphoserine; by LATS1 and LATS2. A Phosphothreonine modification is found at Thr-110. Thr-119 carries the post-translational modification Phosphothreonine; by MAPK8 and MAPK9. Residue Ser-127 is modified to Phosphoserine; by LATS1 and LATS2. Ser-128 and Ser-131 each carry phosphoserine. The segment at 133–158 is disordered; that stretch reads QLGAVSPGTLTPTGVVSGPAATPTAQ. Ser-138 carries the phosphoserine; by MAPK8 and MAPK9 modification. Thr-154 is subject to Phosphothreonine; by MAPK8 and MAPK9. Residue Ser-164 is modified to Phosphoserine; by LATS1 and LATS2. WW domains are found at residues 171–204 and 230–263; these read VPLP…DPRK and GPLP…DPRL. Phosphoserine occurs at positions 274 and 289. Disordered stretches follow at residues 275–309 and 355–407; these read QSAP…MRLQ and LEQD…MSSY. Positions 291–504 are transactivation domain; it reads QGGVMGGSNS…LDKESFLTWL (214 aa). Residues 298–359 are a coiled coil; the sequence is SNSNQQQQMR…SQLPTLEQDG (62 aa). Residues 355–391 are compositionally biased toward polar residues; the sequence is LEQDGGTQNPVSSPGMSQELRTMTTNSSDPFLNSGTY. Ser-367 is subject to Phosphoserine; by MAPK8 and MAPK9. 4 positions are modified to phosphoserine: Ser-371, Ser-381, Ser-382, and Ser-388. A Phosphoserine; by LATS1 and LATS2 modification is found at Ser-397. 2 positions are modified to phosphoserine; by CK1: Ser-400 and Ser-403. At Tyr-407 the chain carries Phosphotyrosine; by ABL1. Thr-412 is subject to Phosphothreonine; by MAPK8 and MAPK9.

It belongs to the YAP1 family. In terms of assembly, part of a complex when phosphorylated that contains DSG3, PKP1, YAP1 and YWHAG; the complex is required for localization of DSG3 and YAP1 to the cell membrane in keratinocytes. Binds to the SH3 domain of the YES kinase. Binds to WBP1 and WBP2. Binds, in vitro, through the WW1 domain, to neural isoforms of ENAH that contain the PPSY motif. The phosphorylated form interacts with YWHAB. Interacts (via WW domains) with LATS1 (via PPxY motif 2). Interacts with LATS2. Interacts with TEAD1, TEAD2, TEAD3 and TEAD4. Interacts with TP73. Interacts with RUNX1. Interacts with HCK. Interacts (via WW domains) with PTPN14 (via PPxY motif 2); this interaction leads to the cytoplasmic sequestration of YAP1 and inhibits its transcriptional coactivator activity. Interacts (when phosphorylated at Ser-127) with SMAD2, SMAD3 and WWTR1. Interacts with PRRG2 (via cytoplasmic domain). Interacts (via WW domains) with PRRG4 (via cytoplasmic domain). Interacts (phosphorylated) with CLDN18; the interaction sequesters YAP1 away from the nucleus and thereby restricts transcription of YAP1 target genes. Interacts with SMAD1. Interacts with AMOTL2, the interaction is required for ubiquitination of AMOTL2 and localization of YAP1 to tight junctions. Interacts with AMOT isoform 1; the interaction facilitates translocation of YAP1 to the cytoplasm and tight junctions. Interacts (via WW domain 1) with isoform 3 of ERBB4 (via PPxY motif 2). Phosphorylated by LATS1 and LATS2; leading to cytoplasmic translocation and inactivation. Phosphorylated by ABL1; leading to YAP1 stabilization, enhanced interaction with TP73 and recruitment onto proapoptotic genes; in response to DNA damage. Phosphorylation at Ser-400 and Ser-403 by CK1 is triggered by previous phosphorylation at Ser-397 by LATS proteins and leads to YAP1 ubiquitination by SCF(beta-TRCP) E3 ubiquitin ligase and subsequent degradation. Phosphorylated at Thr-119, Ser-138, Thr-154, Ser-367 and Thr-412 by MAPK8/JNK1 and MAPK9/JNK2, which is required for the regulation of apoptosis by YAP1. Phosphorylated in the nucleus by PRP4K; phosphorylation leads to nuclear exclusion. In terms of processing, lactylation by AARS1 promotes nuclear localization and stabilization of YAP1, leading to increased Hippo signaling pathway. Delactylated by SIRT1. Post-translationally, ubiquitinated by SCF(beta-TRCP) E3 ubiquitin ligase. In terms of tissue distribution, increased expression seen in some liver and prostate cancers. Isoforms lacking the transactivation domain found in striatal neurons of patients with Huntington disease (at protein level).

It localises to the cytoplasm. It is found in the nucleus. The protein localises to the cell junction. The protein resides in the tight junction. Its subcellular location is the cell membrane. In terms of biological role, transcriptional regulator with dual roles as a coactivator and corepressor. Critical downstream regulatory target in the Hippo signaling pathway, crucial for organ size control and tumor suppression by restricting proliferation and promoting apoptosis. The Hippo signaling pathway core involves a kinase cascade featuring STK3/MST2 and STK4/MST1, along with its regulatory partner SAV1, which phosphorylates and activates LATS1/2 in complex with their regulatory protein, MOB1. This activation leads to the phosphorylation and inactivation of the YAP1 oncoprotein and WWTR1/TAZ. Phosphorylation of YAP1 by LATS1/2 prevents its nuclear translocation, thereby regulating the expression of its target genes. The transcriptional regulation of gene expression requires TEAD transcription factors and modulates cell growth, anchorage-independent growth, and induction of epithelial-mesenchymal transition (EMT). Plays a key role in tissue tension and 3D tissue shape by regulating the cortical actomyosin network, acting via ARHGAP18, a Rho GTPase activating protein that suppresses F-actin polymerization. It also suppresses ciliogenesis by acting as a transcriptional corepressor of TEAD4 target genes AURKA and PLK1. In conjunction with WWTR1, regulates TGFB1-dependent SMAD2 and SMAD3 nuclear accumulation. Synergizes with WBP2 to enhance PGR activity. Its function is as follows. Activates the C-terminal fragment (CTF) of ERBB4 (isoform 3). This is Transcriptional coactivator YAP1 from Homo sapiens (Human).